The primary structure comprises 195 residues: Calcineurin B homologous protein 1 (195 aa).

The N-myristoyl glycine moiety is linked to residue G2. The Necessary for association with microtubule and interaction with GAPDH motif lies at 2 to 6 (GSRAS). EF-hand domains are found at residues 26 to 61 (SQITRLYSRFTSLDKGENGTLSREDFQRIPELAINP), 71 to 106 (FSEGEDQVNFRGFMRTLAHFRPIEDNEKSKDVNGPE), 110 to 145 (SRSNKLHFAFRLYDLDKDDKISRDELLQVLRMMVGV), and 151 to 186 (QLGSIADRTIQEADQDGDSAISFTEFVKVLEKVDVE). Ca(2+)-binding residues include D123, D125, D127, K129, and E134. The short motif at 138 to 147 (VLRMMVGVNI) is the Nuclear export signal 1 element. Positions 164, 166, 168, and 175 each coordinate Ca(2+). A Nuclear export signal 2 motif is present at residues 176–185 (FVKVLEKVDV).

This sequence belongs to the calcineurin regulatory subunit family. CHP subfamily. In terms of assembly, monomer. Interacts with STK17B; the interaction occurs in a calcium-independent manner and induces the translocation of CHP1 from the Golgi to the nucleus. Interacts with GAPDH; the interaction is direct, occurs in a N-myristoylation-dependent manner and facilitates the ability of CHP1 to bind microtubules. Interacts with KIF1B (via the C-terminal end of the kinesin-motor domain); the interaction occurs in a calcium-dependent manner. Associates (via C-terminal domain) with microtubules; the association occurs with polymerized microtubules during the cell cycle in a myristoylation- and calcium-independent manner and is enhanced by GAPDH. Interacts with PPP3CA. Interacts with SLC9A1/NHE1 (via the cytoplasmic C-terminal domain); the interaction occurs at the plasma membrane in a calcium-dependent manner and at a domain that is critical for growth factor stimulation of the exchanger. Interacts with SLC9A3; increases SLC9A3 trafficking and activity at the plasma membrane. Phosphorylated; decreased phosphorylation is associated with an increase in SLC9A1/NHE1 Na(+)/H(+) exchange activity. Phosphorylation occurs in serum-dependent manner. The phosphorylation state may regulate the binding to SLC9A1/NHE1. In terms of processing, both N-myristoylation and calcium-mediated conformational changes are essential for its function in exocytic traffic. N-myristoylation is required for its association with microtubules and interaction with GAPDH, but not for the constitutive association to membranes.

Its subcellular location is the nucleus. The protein resides in the cytoplasm. It is found in the cytoskeleton. The protein localises to the endomembrane system. It localises to the endoplasmic reticulum-Golgi intermediate compartment. Its subcellular location is the endoplasmic reticulum. The protein resides in the cell membrane. It is found in the membrane. In terms of biological role, calcium-binding protein involved in different processes such as regulation of vesicular trafficking, plasma membrane Na(+)/H(+) exchanger and gene transcription. Involved in the constitutive exocytic membrane traffic. Mediates the association between microtubules and membrane-bound organelles of the endoplasmic reticulum and Golgi apparatus and is also required for the targeting and fusion of transcytotic vesicles (TCV) with the plasma membrane. Functions as an integral cofactor in cell pH regulation by controlling plasma membrane-type Na(+)/H(+) exchange activity. Affects the pH sensitivity of SLC9A1/NHE1 by increasing its sensitivity at acidic pH. Required for the stabilization and localization of SLC9A1/NHE1 at the plasma membranes. Inhibits serum- and GTPase-stimulated Na(+)/H(+) exchange. Plays a role as an inhibitor of ribosomal RNA transcription by repressing the nucleolar UBF1 transcriptional activity. May sequester UBF1 in the nucleoplasm and limit its translocation to the nucleolus. Associates to the ribosomal gene promoter. Acts as a negative regulator of the calcineurin/NFAT signaling pathway. Inhibits NFAT nuclear translocation and transcriptional activity by suppressing the calcium-dependent calcineurin phosphatase activity. Also negatively regulates the kinase activity of the apoptosis-induced kinase STK17B. Inhibits both STK17B auto- and substrate-phosphorylations in a calcium-dependent manner. This Mus musculus (Mouse) protein is Calcineurin B homologous protein 1 (Chp1).